Here is a 339-residue protein sequence, read N- to C-terminus: tRNA N6-adenosine threonylcarbamoyltransferase (339 aa).

Fe cation contacts are provided by His-111 and His-115. Residues 134–138 (LVSGG), Asp-167, Gly-180, and Asn-272 each bind substrate. Residue Asp-300 participates in Fe cation binding.

Belongs to the KAE1 / TsaD family. Fe(2+) is required as a cofactor.

The protein localises to the cytoplasm. The catalysed reaction is L-threonylcarbamoyladenylate + adenosine(37) in tRNA = N(6)-L-threonylcarbamoyladenosine(37) in tRNA + AMP + H(+). Required for the formation of a threonylcarbamoyl group on adenosine at position 37 (t(6)A37) in tRNAs that read codons beginning with adenine. Is involved in the transfer of the threonylcarbamoyl moiety of threonylcarbamoyl-AMP (TC-AMP) to the N6 group of A37, together with TsaE and TsaB. TsaD likely plays a direct catalytic role in this reaction. The chain is tRNA N6-adenosine threonylcarbamoyltransferase from Vibrio cholerae serotype O1 (strain ATCC 39541 / Classical Ogawa 395 / O395).